The sequence spans 211 residues: Troponin I, cardiac muscle (211 aa).

The interval 1 to 25 (MADESSDAAGEPQPAPAPVRRRSSA) is disordered. An N-acetylalanine modification is found at Ala2. Ser5 and Ser6 each carry phosphoserine. Phosphoserine; by PKA and PKD/PRKD1 occurs at positions 23 and 24. Tyr27 is modified (phosphotyrosine). The residue at position 32 (Thr32) is a Phosphothreonine; by STK4/MST1. Positions 33–80 (EPHAKKKSKISASRKLQLKTLMLQIAKQEMEREAEERRGEKGRVLSTR) are involved in binding TNC. Ser43 and Ser45 each carry phosphoserine; by PKC/PRKCE. Thr52 carries the phosphothreonine; by STK4/MST1 modification. Ser78 is subject to Phosphoserine. The residue at position 79 (Thr79) is a Phosphothreonine. Phosphothreonine; by STK4/MST1 is present on residues Thr130 and Thr144. An involved in binding TNC and actin region spans residues 130–151 (TQKIYDLRGKFKRPTLRRVRIS). Ser151 is modified (phosphoserine; by PAK3). Phosphoserine is present on residues Ser167 and Ser200.

The protein belongs to the troponin I family. In terms of assembly, interacts with TRIM63. Binds to actin and tropomyosin. Interacts with STK4/MST1. In terms of processing, phosphorylated at Ser-23 and Ser-24 by PRKD1; phosphorylation reduces myofilament calcium sensitivity. Phosphorylated preferentially at Thr-32. Phosphorylation by STK4/MST1 alters its binding affinity to TNNC1 (cardiac Tn-C) and TNNT2 (cardiac Tn-T). Phosphorylated at Ser-43 and Ser-45 by PRKCE; phosphorylation increases myocardium contractile dysfunction.

Its function is as follows. Troponin I is the inhibitory subunit of troponin, the thin filament regulatory complex which confers calcium-sensitivity to striated muscle actomyosin ATPase activity. This is Troponin I, cardiac muscle (Tnni3) from Rattus norvegicus (Rat).